A 185-amino-acid polypeptide reads, in one-letter code: Peptidyl-tRNA hydrolase (185 aa).

Y14 serves as a coordination point for tRNA. H19 functions as the Proton acceptor in the catalytic mechanism. TRNA contacts are provided by F63, N65, and N111.

Belongs to the PTH family. As to quaternary structure, monomer.

Its subcellular location is the cytoplasm. It carries out the reaction an N-acyl-L-alpha-aminoacyl-tRNA + H2O = an N-acyl-L-amino acid + a tRNA + H(+). Functionally, hydrolyzes ribosome-free peptidyl-tRNAs (with 1 or more amino acids incorporated), which drop off the ribosome during protein synthesis, or as a result of ribosome stalling. Its function is as follows. Catalyzes the release of premature peptidyl moieties from peptidyl-tRNA molecules trapped in stalled 50S ribosomal subunits, and thus maintains levels of free tRNAs and 50S ribosomes. The polypeptide is Peptidyl-tRNA hydrolase (Desulfitobacterium hafniense (strain Y51)).